The primary structure comprises 39 residues: Cecropin (39 aa).

Its subcellular location is the secreted. Antibacterial peptide active against Gram-negative bacterium E.coli. Has no activity against Gram-positive bacterium M.luteus. Weakly active against M.luteus. This chain is Cecropin, found in Calliphora vicina (Blue blowfly).